The chain runs to 144 residues: Large ribosomal subunit protein uL15 (144 aa).

The tract at residues Met1–Leu57 is disordered. Positions Arg21 to Gly31 are enriched in gly residues. Residues Gly32–Gly44 show a composition bias toward basic residues.

This sequence belongs to the universal ribosomal protein uL15 family. As to quaternary structure, part of the 50S ribosomal subunit.

Binds to the 23S rRNA. This chain is Large ribosomal subunit protein uL15, found in Vibrio cholerae serotype O1 (strain ATCC 39541 / Classical Ogawa 395 / O395).